The chain runs to 542 residues: CTP synthase (542 aa).

The segment at 1–265 (MTRYIFVTGG…DDFVVERFGL (265 aa)) is amidoligase domain. Ser13 lines the CTP pocket. Residue Ser13 participates in UTP binding. ATP is bound by residues 14–19 (SLGKGI) and Asp71. The Mg(2+) site is built by Asp71 and Glu139. CTP is bound by residues 146-148 (DIE), 186-191 (KTKPTQ), and Lys222. UTP is bound by residues 186 to 191 (KTKPTQ) and Lys222. Residues 290 to 541 (TIAMVGKYME…VKAALAQKNK (252 aa)) enclose the Glutamine amidotransferase type-1 domain. An L-glutamine-binding site is contributed by Gly351. Cys378 functions as the Nucleophile; for glutamine hydrolysis in the catalytic mechanism. Residues 379–382 (LGMQ), Glu402, and Arg469 each bind L-glutamine. Active-site residues include His514 and Glu516.

This sequence belongs to the CTP synthase family. As to quaternary structure, homotetramer.

The enzyme catalyses UTP + L-glutamine + ATP + H2O = CTP + L-glutamate + ADP + phosphate + 2 H(+). The catalysed reaction is L-glutamine + H2O = L-glutamate + NH4(+). It catalyses the reaction UTP + NH4(+) + ATP = CTP + ADP + phosphate + 2 H(+). It functions in the pathway pyrimidine metabolism; CTP biosynthesis via de novo pathway; CTP from UDP: step 2/2. Allosterically activated by GTP, when glutamine is the substrate; GTP has no effect on the reaction when ammonia is the substrate. The allosteric effector GTP functions by stabilizing the protein conformation that binds the tetrahedral intermediate(s) formed during glutamine hydrolysis. Inhibited by the product CTP, via allosteric rather than competitive inhibition. Catalyzes the ATP-dependent amination of UTP to CTP with either L-glutamine or ammonia as the source of nitrogen. Regulates intracellular CTP levels through interactions with the four ribonucleotide triphosphates. In Pseudomonas putida (strain GB-1), this protein is CTP synthase.